Consider the following 311-residue polypeptide: Ribonuclease Z (311 aa).

The Zn(2+) site is built by His61, His63, Asp65, His66, His148, Asp216, and His275. Asp65 serves as the catalytic Proton acceptor.

The protein belongs to the RNase Z family. In terms of assembly, homodimer. Requires Zn(2+) as cofactor.

The catalysed reaction is Endonucleolytic cleavage of RNA, removing extra 3' nucleotides from tRNA precursor, generating 3' termini of tRNAs. A 3'-hydroxy group is left at the tRNA terminus and a 5'-phosphoryl group is left at the trailer molecule.. Functionally, zinc phosphodiesterase, which displays some tRNA 3'-processing endonuclease activity. Probably involved in tRNA maturation, by removing a 3'-trailer from precursor tRNA. The polypeptide is Ribonuclease Z (Clostridium novyi (strain NT)).